The chain runs to 349 residues: KH domain-containing, RNA-binding, signal transduction-associated protein 2 (349 aa).

Residues 65-135 (LIPVKQYPKF…HLSDELHVLI (71 aa)) enclose the KH domain. Disordered stretches follow at residues 181 to 263 (SEES…PPPA) and 320 to 349 (EEWT…YGRY). The segment covering 218–231 (RGVLTPRGTTVTRG) has biased composition (low complexity). Arg-230 and Arg-240 each carry omega-N-methylarginine. Residues 340-349 (GYREHPYGRY) show a composition bias toward basic and acidic residues.

The protein belongs to the KHDRBS family. Self-associates to form homooligomers. Interacts with SAFB, SFRS9 and YTHDC1. Found in a complex with KHDRBS1, KHDRBS2 and KHDRBS3. Interacts with RBMX. Interacts with the SH3 domains of FYN and PLCG1. Interacts with the SH2 domains of FYN, GRAP2, PLCG1 and RASA1. Interacts with RBMX. Post-translationally, methylated. Phosphorylated on tyrosine residues by FYN. Tyrosine phosphorylated by PTK6 and SRC. Tyrosine phosphorylated by SRC during mitosis. In terms of tissue distribution, expressed in the cortex, cerebellum, striatum, midbrain, brainstem and thalamus of the brain (at protein level). Expressed in neurons (at protein level). Expressed in brain and testis. Expressed in the dentate gyrus of the hippocampus.

The protein resides in the nucleus. RNA-binding protein that plays a role in the regulation of alternative splicing and influences mRNA splice site selection and exon inclusion. Its phosphorylation by FYN inhibits its ability to regulate splice site selection. Induces an increased concentration-dependent incorporation of exon in CD44 pre-mRNA by direct binding to purine-rich exonic enhancer. May function as an adapter protein for Src kinases during mitosis. Binds both poly(A) and poly(U) homopolymers. Phosphorylation by PTK6 inhibits its RNA-binding ability. This is KH domain-containing, RNA-binding, signal transduction-associated protein 2 (Khdrbs2) from Rattus norvegicus (Rat).